We begin with the raw amino-acid sequence, 20 residues long: Cytolysin tenebrosin-A (20 aa).

The tract at residues 3–12 (AVAGAVIEGA) is plays an important role in the hemolytic activity. The tract at residues 11–20 (GATLTFEVLQ) is N-terminal region.

It belongs to the actinoporin family. Sea anemone subfamily. As to quaternary structure, octamer or nonamer in membranes. Monomer in the soluble state.

It is found in the secreted. The protein resides in the nematocyst. The protein localises to the target cell membrane. In terms of biological role, pore-forming protein that forms cations-selective hydrophilic pores of around 1 nm and causes cardiac stimulation and cytolysis. Pore formation is a multi-step process that involves specific recognition of membrane sphingomyelin (but neither cholesterol nor phosphatidylcholine) using aromatic rich region and adjacent phosphocholine (POC) binding site, firm binding to the membrane (mainly driven by hydrophobic interactions) accompanied by the transfer of the N-terminal region to the lipid-water interface and finally pore formation after oligomerization of monomers. This Actinia tenebrosa (Australian red waratah sea anemone) protein is Cytolysin tenebrosin-A.